Consider the following 339-residue polypeptide: Transcription factor IIIA (339 aa).

9 C2H2-type zinc fingers span residues 13 to 37 (YICS…LCKH), 43 to 67 (FPCK…SITH), 73 to 98 (FKCD…NRFH), 105 to 129 (YVCH…QFTH), 135 to 159 (YKCP…EKVH), 162 to 188 (YPCK…KECH), 192 to 214 (VMCD…KKTH), 221 to 246 (YCCP…QSFH), and 252 to 276 (FACE…SVVH). Composition is skewed to basic and acidic residues over residues 275–288 (VHDP…EKCP) and 305–316 (KSKEKSAAKATE). Residues 275-339 (VHDPEKRKLK…ETKGSLVIEK (65 aa)) are disordered.

In terms of tissue distribution, synthesized in oocytes and, in much lower levels, in somatic cells.

The protein localises to the nucleus. Involved in ribosomal large subunit biogenesis. Interacts with the internal control region (ICR) of approximately 50 bases within the 5S RNA genes, is required for correct transcription of these genes by RNA polymerase III. Also binds the transcribed 5S RNA's. This is Transcription factor IIIA (gtf3a) from Xenopus borealis (Kenyan clawed frog).